Consider the following 916-residue polypeptide: Bifunctional aspartokinase/homoserine dehydrogenase 2, chloroplastic (916 aa).

A chloroplast-targeting transit peptide spans 1–87; sequence MATLKPSFTV…VDQVQIPKGE (87 aa). Positions 88–336 are aspartokinase; that stretch reads MWSVHKFGGT…VNEAVILQTL (249 aa). The interface stretch occupies residues 337–562; that stretch reads SYQEAWEMSY…LSRTTLAMGI (226 aa). ACT domains follow at residues 412–487 and 493–570; these read VEGT…VIPN and AVGQ…LIGA. The interval 563 to 916 is homoserine dehydrogenase; sequence VGPGLIGATL…RLASYLGAPS (354 aa). Isoleucine 568 contacts NAD(+). Residues isoleucine 568, lysine 600, threonine 649, and lysine 673 each coordinate NADP(+). Isoleucine 568 serves as a coordination point for NADPH. Threonine 649 lines the NAD(+) pocket. NADPH is bound by residues threonine 649 and lysine 673. The Na(+) site is built by glutamate 700, valine 703, alanine 705, and leucine 707. NADP(+) is bound by residues glycine 758 and glutamate 761. Residues glutamate 761 and aspartate 772 each contribute to the L-homoserine site. The active-site Proton donor is lysine 776. Residue glycine 893 participates in NAD(+) binding. Glycine 893 contacts NADP(+). Glycine 893 contacts NADPH.

The protein in the N-terminal section; belongs to the aspartokinase family. This sequence in the C-terminal section; belongs to the homoserine dehydrogenase family. In terms of assembly, homo- or heterodimer. The cofactor is a metal cation.

Its subcellular location is the plastid. It is found in the chloroplast. The enzyme catalyses L-homoserine + NADP(+) = L-aspartate 4-semialdehyde + NADPH + H(+). The catalysed reaction is L-homoserine + NAD(+) = L-aspartate 4-semialdehyde + NADH + H(+). It carries out the reaction L-aspartate + ATP = 4-phospho-L-aspartate + ADP. Its pathway is amino-acid biosynthesis; L-lysine biosynthesis via DAP pathway; (S)-tetrahydrodipicolinate from L-aspartate: step 1/4. The protein operates within amino-acid biosynthesis; L-methionine biosynthesis via de novo pathway; L-homoserine from L-aspartate: step 1/3. It participates in amino-acid biosynthesis; L-methionine biosynthesis via de novo pathway; L-homoserine from L-aspartate: step 3/3. It functions in the pathway amino-acid biosynthesis; L-threonine biosynthesis; L-threonine from L-aspartate: step 1/5. Its pathway is amino-acid biosynthesis; L-threonine biosynthesis; L-threonine from L-aspartate: step 3/5. Threonine interaction with Gln-443 leads to inhibition of aspartate kinase activity and facilitates the binding of a second threonine on Gln-524, leading to a partial inhibition of homoserine dehydrogenase activity (25% of activity remaining at saturation with threonine). Homoserine dehydrogenase activity is also partially inhibited by cysteine (15% of activity remaining at saturation with cysteine). No synergy between threonine and cysteine for the inhibition. 13-fold activation of aspartate kinase activity by cysteine, isoleucine, valine, serine and alanine at 2.5 mM and 4-fold activation by leucine at 2.5 mM, but no activation of homoserine dehydrogenase activity. In terms of biological role, bifunctional aspartate kinase and homoserine dehydrogenase that catalyzes the first and the third steps toward the synthesis of lysine, methionine and threonine from aspartate. The protein is Bifunctional aspartokinase/homoserine dehydrogenase 2, chloroplastic (AKHSDH2) of Arabidopsis thaliana (Mouse-ear cress).